The following is a 532-amino-acid chain: Spore germination protein 270-11 (532 aa).

2 disordered regions span residues 113 to 225 (TTTS…GYGS) and 328 to 436 (LSPT…TTGT). A compositionally biased stretch (low complexity) spans 329–426 (SPTCSDSSSP…GSGSSSETQP (98 aa)). Tandem repeats lie at residues 339-342 (TPTP), 343-346 (TETP), 347-350 (TETP), 351-354 (TETP), 355-358 (TETP), 359-362 (TETP), 363-366 (TETP), 367-370 (TETP), 371-374 (TETE), 375-378 (TPTP), 397-400 (TPTP), 401-404 (TETD), and 405-408 (TPTP). Positions 339–378 (TPTPTETPTETPTETPTETPTETPTETPTETPTETETPTP) are 10 X 4 AA tandem repeats of T-[EP]-T-[EP]. Positions 397–408 (TPTPTETDTPTP) are 3 X 4 AA tandem repeats of T-[EP]-T-[PD].

This is Spore germination protein 270-11 (celB) from Dictyostelium discoideum (Social amoeba).